The primary structure comprises 140 residues: Large ribosomal subunit protein uL16 (140 aa).

Belongs to the universal ribosomal protein uL16 family. In terms of assembly, part of the 50S ribosomal subunit.

In terms of biological role, binds 23S rRNA and is also seen to make contacts with the A and possibly P site tRNAs. The sequence is that of Large ribosomal subunit protein uL16 from Citrifermentans bemidjiense (strain ATCC BAA-1014 / DSM 16622 / JCM 12645 / Bem) (Geobacter bemidjiensis).